Here is a 366-residue protein sequence, read N- to C-terminus: Transmembrane protein 25 (366 aa).

An N-terminal signal peptide occupies residues 1 to 26; the sequence is MALPPGPAALRHTLLLLPALLSSGWG. At 27–232 the chain is on the extracellular side; sequence ELEPQIDGQT…APGLLATRVE (206 aa). The 94-residue stretch at 30–123 folds into the Ig-like domain; that stretch reads PQIDGQTWAE…SGRSANASVI (94 aa). A disulfide bridge connects residues C52 and C107. N106, N162, N175, N192, and N205 each carry an N-linked (GlcNAc...) asparagine glycan. A helical transmembrane segment spans residues 233 to 253; that stretch reads VPLLGIVVAAGLALGTLVGFS. Residues 254–366 lie on the Cytoplasmic side of the membrane; the sequence is TLVACLVCRK…SSVSSDEIWL (113 aa). Positions 299 to 308 are enriched in polar residues; the sequence is PSNLQLNDLT. Residues 299–335 are disordered; sequence PSNLQLNDLTPDSRAVKPADRQMAQNNSRPELLDPEP.

In terms of assembly, interacts with GRIN2B. Expressed throughout the brain with higher levels in the pyramidal cell layer of the hippocampal CA1 and CA3 regions. Also highly expressed within the hippocampal dentate gyrus region and cerebellum and in scattered neurons in the cerebral cortex.

Its subcellular location is the cell membrane. The protein resides in the secreted. It localises to the late endosome. It is found in the lysosome. In neurons, modulates the degradation of NMDA receptor GRIN2B subunit. Plays a role in the regulation of neuronal excitability. This Homo sapiens (Human) protein is Transmembrane protein 25 (TMEM25).